A 124-amino-acid polypeptide reads, in one-letter code: UPF0357 protein C1687.07 (124 aa).

Positions 1-24 are cleaved as a signal peptide; that stretch reads MASFHIIVSYVTVVLAIIIAITFA.

This sequence belongs to the UPF0357 family.

This Schizosaccharomyces pombe (strain 972 / ATCC 24843) (Fission yeast) protein is UPF0357 protein C1687.07.